Consider the following 156-residue polypeptide: Transcriptional repressor NrdR (156 aa).

A zinc finger lies at 3–34; it reads CPKCSSTHSRVVDSRHADDANAIRRRRECENC. An ATP-cone domain is found at 49-139; the sequence is LIVVKKDGTR…VYKEFKDVDQ (91 aa).

The protein belongs to the NrdR family. It depends on Zn(2+) as a cofactor.

Negatively regulates transcription of bacterial ribonucleotide reductase nrd genes and operons by binding to NrdR-boxes. This is Transcriptional repressor NrdR from Staphylococcus haemolyticus (strain JCSC1435).